The primary structure comprises 300 residues: UDP-N-acetylenolpyruvoylglucosamine reductase (300 aa).

Positions 28–193 (KTGGPADWLA…LDATFALKLG (166 aa)) constitute an FAD-binding PCMH-type domain. Residue arginine 172 is part of the active site. Serine 222 (proton donor) is an active-site residue. Glutamate 292 is a catalytic residue.

The protein belongs to the MurB family. FAD is required as a cofactor.

The protein localises to the cytoplasm. The enzyme catalyses UDP-N-acetyl-alpha-D-muramate + NADP(+) = UDP-N-acetyl-3-O-(1-carboxyvinyl)-alpha-D-glucosamine + NADPH + H(+). It functions in the pathway cell wall biogenesis; peptidoglycan biosynthesis. In terms of biological role, cell wall formation. This chain is UDP-N-acetylenolpyruvoylglucosamine reductase, found in Limosilactobacillus fermentum (strain NBRC 3956 / LMG 18251) (Lactobacillus fermentum).